We begin with the raw amino-acid sequence, 113 residues long: Small ribosomal subunit protein bS6 (113 aa).

The protein belongs to the bacterial ribosomal protein bS6 family.

Its function is as follows. Binds together with bS18 to 16S ribosomal RNA. The protein is Small ribosomal subunit protein bS6 of Buchnera aphidicola subsp. Schizaphis graminum (strain Sg).